Consider the following 95-residue polypeptide: Fluoride-specific ion channel FluC 1 (95 aa).

Helical transmembrane passes span 23–43, 49–69, and 70–90; these read LIDAPLALLGINLLGSFLMGW, LWGTGFLGGFTSFSAFALLMF, and DGAYLYAAVTVIGCVAAWLLG. Residues glycine 56 and threonine 59 each contribute to the Na(+) site.

Belongs to the fluoride channel Fluc/FEX (TC 1.A.43) family.

It localises to the cell membrane. The catalysed reaction is fluoride(in) = fluoride(out). Na(+) is not transported, but it plays an essential structural role and its presence is essential for fluoride channel function. Its function is as follows. Fluoride-specific ion channel. Important for reducing fluoride concentration in the cell, thus reducing its toxicity. This Corynebacterium diphtheriae (strain ATCC 700971 / NCTC 13129 / Biotype gravis) protein is Fluoride-specific ion channel FluC 1.